Reading from the N-terminus, the 591-residue chain is Aspartate--tRNA(Asp/Asn) ligase (591 aa).

Position 175 (Glu175) interacts with L-aspartate. Residues 199 to 202 (QQYK) form an aspartate region. Residues Arg221 and His450 each contribute to the L-aspartate site. 221–223 (RDE) provides a ligand contact to ATP. Glu484 is a binding site for ATP. Position 491 (Arg491) interacts with L-aspartate. 536–539 (GVDR) is an ATP binding site.

The protein belongs to the class-II aminoacyl-tRNA synthetase family. Type 1 subfamily. Homodimer.

It localises to the cytoplasm. The catalysed reaction is tRNA(Asx) + L-aspartate + ATP = L-aspartyl-tRNA(Asx) + AMP + diphosphate. Functionally, aspartyl-tRNA synthetase with relaxed tRNA specificity since it is able to aspartylate not only its cognate tRNA(Asp) but also tRNA(Asn). Reaction proceeds in two steps: L-aspartate is first activated by ATP to form Asp-AMP and then transferred to the acceptor end of tRNA(Asp/Asn). The sequence is that of Aspartate--tRNA(Asp/Asn) ligase from Rhodopseudomonas palustris (strain ATCC BAA-98 / CGA009).